The following is a 264-amino-acid chain: Undecaprenyl-diphosphatase (264 aa).

A run of 8 helical transmembrane segments spans residues M1–I21, Q39–F59, S83–F103, S113–K133, V143–V163, V181–L201, L220–I240, and S244–V264.

The protein belongs to the UppP family.

The protein localises to the cell inner membrane. The catalysed reaction is di-trans,octa-cis-undecaprenyl diphosphate + H2O = di-trans,octa-cis-undecaprenyl phosphate + phosphate + H(+). In terms of biological role, catalyzes the dephosphorylation of undecaprenyl diphosphate (UPP). Confers resistance to bacitracin. This Campylobacter curvus (strain 525.92) protein is Undecaprenyl-diphosphatase.